A 379-amino-acid polypeptide reads, in one-letter code: Alcohol dehydrogenase class-3 (379 aa).

An N-acetylserine modification is found at Ser2. The Zn(2+) site is built by Cys48, His70, Cys100, Cys103, Cys106, Cys114, and Cys177.

It belongs to the zinc-containing alcohol dehydrogenase family. Class-III subfamily. Zn(2+) is required as a cofactor.

The catalysed reaction is a primary alcohol + NAD(+) = an aldehyde + NADH + H(+). It catalyses the reaction a secondary alcohol + NAD(+) = a ketone + NADH + H(+). The enzyme catalyses S-(hydroxymethyl)glutathione + NADP(+) = S-formylglutathione + NADPH + H(+). It carries out the reaction S-(hydroxymethyl)glutathione + NAD(+) = S-formylglutathione + NADH + H(+). The catalysed reaction is octan-1-ol + NAD(+) = octanal + NADH + H(+). Its function is as follows. Class-III ADH is remarkably ineffective in oxidizing ethanol, but it readily catalyzes the oxidation of long-chain primary alcohols and the oxidation of S-(hydroxymethyl) glutathione. This chain is Alcohol dehydrogenase class-3 (Fdh), found in Drosophila melanogaster (Fruit fly).